The following is a 202-amino-acid chain: Ribosome maturation factor RimP (202 aa).

The protein belongs to the RimP family.

The protein localises to the cytoplasm. Its function is as follows. Required for maturation of 30S ribosomal subunits. The protein is Ribosome maturation factor RimP of Paracidovorax citrulli (strain AAC00-1) (Acidovorax citrulli).